Consider the following 957-residue polypeptide: Glycine dehydrogenase (decarboxylating) 2 (957 aa).

Lys-707 is modified (N6-(pyridoxal phosphate)lysine).

It belongs to the GcvP family. The glycine cleavage system is composed of four proteins: P, T, L and H. Requires pyridoxal 5'-phosphate as cofactor.

The enzyme catalyses N(6)-[(R)-lipoyl]-L-lysyl-[glycine-cleavage complex H protein] + glycine + H(+) = N(6)-[(R)-S(8)-aminomethyldihydrolipoyl]-L-lysyl-[glycine-cleavage complex H protein] + CO2. Functionally, the glycine cleavage system catalyzes the degradation of glycine. The P protein binds the alpha-amino group of glycine through its pyridoxal phosphate cofactor; CO(2) is released and the remaining methylamine moiety is then transferred to the lipoamide cofactor of the H protein. This Pseudomonas fluorescens (strain Pf0-1) protein is Glycine dehydrogenase (decarboxylating) 2.